The sequence spans 483 residues: Glutamyl-tRNA(Gln) amidotransferase subunit A (483 aa).

Active-site charge relay system residues include Lys76 and Ser151. The active-site Acyl-ester intermediate is Ser175.

The protein belongs to the amidase family. GatA subfamily. As to quaternary structure, heterotrimer of A, B and C subunits.

The enzyme catalyses L-glutamyl-tRNA(Gln) + L-glutamine + ATP + H2O = L-glutaminyl-tRNA(Gln) + L-glutamate + ADP + phosphate + H(+). Allows the formation of correctly charged Gln-tRNA(Gln) through the transamidation of misacylated Glu-tRNA(Gln) in organisms which lack glutaminyl-tRNA synthetase. The reaction takes place in the presence of glutamine and ATP through an activated gamma-phospho-Glu-tRNA(Gln). This chain is Glutamyl-tRNA(Gln) amidotransferase subunit A, found in Pseudomonas putida (strain ATCC 700007 / DSM 6899 / JCM 31910 / BCRC 17059 / LMG 24140 / F1).